Here is a 105-residue protein sequence, read N- to C-terminus: Vacuolar ATPase assembly integral membrane protein VMA21 homolog (105 aa).

The segment at 1–26 is disordered; it reads MSTKNKKAAGGNGVAPKQTRQQSHDS. Topologically, residues 1-36 are cytoplasmic; it reads MSTKNKKAAGGNGVAPKQTRQQSHDSQDYSSFKTVL. Residues 37–57 form a helical membrane-spanning segment; that stretch reads FYCMLIVFLPVLTFFVLKGFV. Topologically, residues 58–68 are lumenal; that stretch reads LDQFLDISEVK. The chain crosses the membrane as a helical span at residues 69–89; that stretch reads VNIASAVGAVVALHIALGLYI. The Cytoplasmic portion of the chain corresponds to 90–105; it reads YRAYFGAPGSKGSKTD.

This sequence belongs to the VMA21 family.

The protein resides in the endoplasmic reticulum membrane. The protein localises to the endoplasmic reticulum-Golgi intermediate compartment membrane. It localises to the cytoplasmic vesicle. Its subcellular location is the COPII-coated vesicle membrane. In terms of biological role, required for the assembly of the V0 complex of the vacuolar ATPase (V-ATPase) in the endoplasmic reticulum. The polypeptide is Vacuolar ATPase assembly integral membrane protein VMA21 homolog (Drosophila melanogaster (Fruit fly)).